The following is a 262-amino-acid chain: Large ribosomal subunit protein uL10m (262 aa).

The transit peptide at 1–28 (MAAAVAGILRGGLPPRAAWLPTLQTVRH) directs the protein to the mitochondrion. A disordered region spans residues 243–262 (GDCATSANEKLHPPDPAPDA).

The protein belongs to the universal ribosomal protein uL10 family. In terms of assembly, component of the mitochondrial ribosome large subunit (39S) which comprises a 16S rRNA and about 50 distinct proteins.

It localises to the mitochondrion. This is Large ribosomal subunit protein uL10m (Mrpl10) from Mus musculus (Mouse).